A 316-amino-acid chain; its full sequence is 2-phospho-L-lactate guanylyltransferase (316 aa).

A compositionally biased stretch (low complexity) spans Thr-72–Thr-85. Disordered regions lie at residues Thr-72–Thr-107 and Leu-119–Lys-138. Over residues His-92–Thr-107 the composition is skewed to polar residues.

Belongs to the CofC family. In terms of assembly, homodimer.

The catalysed reaction is (2S)-2-phospholactate + GTP + H(+) = (2S)-lactyl-2-diphospho-5'-guanosine + diphosphate. It functions in the pathway cofactor biosynthesis; coenzyme F420 biosynthesis. Guanylyltransferase that catalyzes the activation of (2S)-2-phospholactate (2-PL) as (2S)-lactyl-2-diphospho-5'-guanosine, via the condensation of 2-PL with GTP. It is involved in the biosynthesis of coenzyme F420, a hydride carrier cofactor. In Haloquadratum walsbyi (strain DSM 16790 / HBSQ001), this protein is 2-phospho-L-lactate guanylyltransferase.